The sequence spans 298 residues: Ethanolamine ammonia-lyase small subunit (298 aa).

The adenosylcob(III)alamin site is built by V210, E231, and C261.

Belongs to the EutC family. As to quaternary structure, the basic unit is a heterodimer which dimerizes to form tetramers. The heterotetramers trimerize; 6 large subunits form a core ring with 6 small subunits projecting outwards. The cofactor is adenosylcob(III)alamin.

The protein resides in the bacterial microcompartment. It catalyses the reaction ethanolamine = acetaldehyde + NH4(+). It participates in amine and polyamine degradation; ethanolamine degradation. In terms of biological role, catalyzes the deamination of various vicinal amino-alcohols to oxo compounds. Allows this organism to utilize ethanolamine as the sole source of nitrogen and carbon in the presence of external vitamin B12. The protein is Ethanolamine ammonia-lyase small subunit of Salmonella agona (strain SL483).